We begin with the raw amino-acid sequence, 79 residues long: Small ribosomal subunit protein bS18 (79 aa).

As to quaternary structure, part of the 30S ribosomal subunit. Forms a tight heterodimer with protein bS6. In terms of processing, both N-terminus methionine truncation and retention have been observed for this protein. May be methylated up to 6 times, on undetermined residues.

Binds as a heterodimer with protein bS6 to the central domain of the 16S rRNA, where it helps stabilize the platform of the 30S subunit. The sequence is that of Small ribosomal subunit protein bS18 from Rhodopseudomonas palustris (strain ATCC BAA-98 / CGA009).